Consider the following 250-residue polypeptide: Flavin-dependent thymidylate synthase (250 aa).

The ThyX domain maps to 7–233 (LSVELIACSS…PTVFGDFEIE (227 aa)). Residues 92-95 (ELVR), 103-107 (QLSQR), and Arg172 each bind dUMP. FAD-binding positions include 95-97 (RHR) and Gln103. The ThyX motif signature appears at 95–105 (RHRHFSFSQLS). Residues 188 to 190 (NFR) and His194 contribute to the FAD site. Arg199 provides a ligand contact to dUMP. Arg199 (involved in ionization of N3 of dUMP, leading to its activation) is an active-site residue.

The protein belongs to the thymidylate synthase ThyX family. Homotetramer. FAD is required as a cofactor.

The catalysed reaction is dUMP + (6R)-5,10-methylene-5,6,7,8-tetrahydrofolate + NADPH + H(+) = dTMP + (6S)-5,6,7,8-tetrahydrofolate + NADP(+). It functions in the pathway pyrimidine metabolism; dTTP biosynthesis. Its function is as follows. Catalyzes the reductive methylation of 2'-deoxyuridine-5'-monophosphate (dUMP) to 2'-deoxythymidine-5'-monophosphate (dTMP) while utilizing 5,10-methylenetetrahydrofolate (mTHF) as the methyl donor, and NADPH and FADH(2) as the reductant. This chain is Flavin-dependent thymidylate synthase, found in Corynebacterium glutamicum (strain ATCC 13032 / DSM 20300 / JCM 1318 / BCRC 11384 / CCUG 27702 / LMG 3730 / NBRC 12168 / NCIMB 10025 / NRRL B-2784 / 534).